The following is a 302-amino-acid chain: uncharacterized protein (302 aa).

The interval 1–24 (MTEISELASSSQKPEKTKYNLPKP) is disordered.

This is an uncharacterized protein from Schizosaccharomyces pombe (strain 972 / ATCC 24843) (Fission yeast).